The following is a 257-amino-acid chain: Paired box protein 1 homolog (257 aa).

Residues 26 to 37 show a composition bias toward low complexity; the sequence is TTPSSTSTTPSS. A disordered region spans residues 26–58; it reads TTPSSTSTTPSSDNGIQQYSSISTSSGYAPANS. The span at 38 to 52 shows a compositional bias: polar residues; it reads DNGIQQYSSISTSSG. A DNA-binding region (paired) is located at residues 61-187; that stretch reads KTAEVNQLGG…SSISRILRNK (127 aa). The PAI subdomain stretch occupies residues 64–120; sequence EVNQLGGVFVNGRPLPFEMRCKIVELSRQGTRPCDISRQLKISHGCVSKILTRFSEN. An RED subdomain region spans residues 139 to 187; the sequence is KVVEYIRSLKRSDPGIFAWEIRDRLISADICDRANLPSVSSISRILRNK.

The protein localises to the nucleus. In terms of biological role, transcription factor. May play a role in pharyngeal cell differentiation. May have a protective role in response to infection by the Gram-negative bacterium Vibrio cholerae. The protein is Paired box protein 1 homolog of Caenorhabditis elegans.